Here is a 23-residue protein sequence, read N- to C-terminus: Alyteserin-1c (23 aa).

Ser-23 carries the serine amide modification.

Expressed by the skin glands.

It localises to the secreted. Its subcellular location is the target cell membrane. Functionally, antibacterial peptide with amphipathic alpha-helical structure that shows selective growth-inhibitory activity against Gram-negative bacteria but low hemolytic activity against human erythrocytes (LC(50)=145-220 uM). It is moderately active against the Gram-negative bacteria E.coli (MIC=25 uM), K.pneumoniae (MIC=50 uM), P.aeruginosa (MIC=25 uM), A.baumannii (MIC=6 uM), and is weaky active against the Gram-positive S.aureus (MIC=100-250 uM). This Alytes obstetricans (Common midwife toad) protein is Alyteserin-1c.